The sequence spans 558 residues: Ceramide kinase-like protein (558 aa).

Positions 1–36 (MPWRRRRNRVSALEGGREEEAPPEAAAVPPALLTSP) are disordered. 2 consecutive short sequence motifs (nuclear localization signal) follow at residues 2 to 9 (PWRRRRNR) and 102 to 106 (KLKRR). The DAGKc domain occupies 164-339 (NRPKSLKILL…VDVCTFSTAG (176 aa)).

In terms of processing, phosphorylated on serine residues. Isoform 1 and isoform 2 are expressed in adult retina, liver and pancreas as well as in fetal brain, lung and kidney. Isoform 3 is expressed in adult retina as well as in fetal lung and liver. Isoform 4 is expressed in adult retina, lung and kidney as well as in fetal lung and liver. Moderately expressed in retina, kidney, lung, testis, trachea, and pancreas. Weakly expressed in brain, placenta and liver.

Its subcellular location is the cytoplasm. The protein resides in the nucleus. It is found in the nucleolus. The protein localises to the golgi apparatus. It localises to the trans-Golgi network. Its subcellular location is the endoplasmic reticulum. Has no detectable ceramide-kinase activity. Overexpression of CERKL protects cells from apoptosis in oxidative stress conditions. The sequence is that of Ceramide kinase-like protein (CERKL) from Homo sapiens (Human).